Reading from the N-terminus, the 179-residue chain is Transmembrane protein 196 (179 aa).

4 helical membrane-spanning segments follow: residues 11-31 (LLVL…VGAV), 44-61 (LGDS…ILCA), 67-87 (LVMI…ILNF), and 100-120 (LYPL…GCTL).

The protein localises to the cytoplasm. Its subcellular location is the membrane. Acts as a tumor suppressor in lung cancer. Inhibits tumor cell growth by inhibiting cell proliferation and migration and promoting cell apoptosis. Inhibits metastasis of lung cancer by suppressing beta-catenin expression in the Wnt/beta-catenin signaling pathway. This chain is Transmembrane protein 196 (TMEM196), found in Pongo abelii (Sumatran orangutan).